The chain runs to 957 residues: MSQSPSLHQLQELNPFLRRHLGPDATEQQAMLNALGIASRNELIEQTVPPDIRLNRPLDLPAALDEQAALAKLAGYAEQNQVWTSLIGMGYHGTITPTVILRNVLENPGWYTAYTPYQPEIAQGRLEALLNFQQMVIDLTGLPLANASLLDEATAAAEAMALAKRVARNKSNAFFADEHCHPQTLSVLKTRAEGFGFELIVDSVDNLAKHSVFGALLQYPDTHGEVRDLRPLIDQLHSQQALACVAADLLSLVVLAPPGELGADVVLGSTQRFGVPMGYGGPHAAYFACRDDYKRAMPGRIIGVSRDARGNTALRMALQTREQHIRREKANSNICTAQVLLANIAGFYAVYHGPEGLQRIAQRVHRLTFILAAGLEAKGIKRLNQHFFDTLTLNVGGAQAAIIESAEAAHINLRILGRGHLGVSLDETCTEQTVLRLLDIFLGVDHGLEITALDQLALPEGIPASLVRRTPFLAHPVFNLHHSETEMLRYLKQLENKDLALNQSMIPLGSCTMKLNATSEMIPITWPGFAQLHPFAPAAQAAGYKAMIDELESWLCAITGFDAICMQPNSGAQGEYAGLMAITRYHCSRHQPMRTLCLIPSSAHGTNPASAQMAGMEVVIVDCDNDGNVDLADLKAKAHAAGERLSCLMITYPSTHGVYEEGIREICDVVHQYGGQVYMDGANLNAQVGLARPADIGADVSHMNLHKTFCIPHGGGGPGMGPIGIRAHLKPFVASHPVVPVPGLDPNNSAVSAAPWGSASILPISWMYIAMMGPQLADASEVAILSANYLASQLGAAFPVLYRGRNQRVAHECILDLRPLKALTGISEEDVAKRLMDYGFHAPTMSFPVPGTLMVEPTESESKAELDRFVEAMLAIRAEIDEVQQGNWPAENNPLKHAPHTLADVLGVWDRPYSLEQAVAPSAHVRQHKYWPAVNRVDNVYGDRNLFCACVPVEAYR.

Lys707 carries the post-translational modification N6-(pyridoxal phosphate)lysine.

It belongs to the GcvP family. As to quaternary structure, the glycine cleavage system is composed of four proteins: P, T, L and H. Requires pyridoxal 5'-phosphate as cofactor.

It catalyses the reaction N(6)-[(R)-lipoyl]-L-lysyl-[glycine-cleavage complex H protein] + glycine + H(+) = N(6)-[(R)-S(8)-aminomethyldihydrolipoyl]-L-lysyl-[glycine-cleavage complex H protein] + CO2. Functionally, the glycine cleavage system catalyzes the degradation of glycine. The P protein binds the alpha-amino group of glycine through its pyridoxal phosphate cofactor; CO(2) is released and the remaining methylamine moiety is then transferred to the lipoamide cofactor of the H protein. The protein is Glycine dehydrogenase (decarboxylating) 2 (gcvP2) of Pseudomonas putida (strain ATCC 47054 / DSM 6125 / CFBP 8728 / NCIMB 11950 / KT2440).